Here is a 717-residue protein sequence, read N- to C-terminus: Translation initiation factor eIF2B subunit epsilon (717 aa).

Residues 1–14 are compositionally biased toward low complexity; that stretch reads MAATAAVPGAAAGR. The disordered stretch occupies residues 1–37; it reads MAATAAVPGAAAGRASKRGGGGSGGGGTQGAEEEPPP. Arg-18 is modified (omega-N-methylarginine). A compositionally biased stretch (gly residues) spans 18–29; it reads RGGGGSGGGGTQ. Ser-23 carries the phosphoserine modification. Glycyl lysine isopeptide (Lys-Gly) (interchain with G-Cter in ubiquitin) cross-links involve residues Lys-57 and Lys-99. Position 126 is a phosphoserine (Ser-126). Residues Lys-137 and Lys-213 each participate in a glycyl lysine isopeptide (Lys-Gly) (interchain with G-Cter in ubiquitin) cross-link. Residue Thr-318 is modified to Phosphothreonine. Residues 442-479 form a disordered region; that stretch reads GSVISLHPPDAEEDEDDGQFSDDSGADQEKEKVKLKGY. Phosphoserine is present on residues Ser-446, Ser-462, and Ser-465. Acidic residues predominate over residues 452 to 467; the sequence is AEEDEDDGQFSDDSGA. Lys-501 participates in a covalent cross-link: Glycyl lysine isopeptide (Lys-Gly) (interchain with G-Cter in ubiquitin). The interval 517 to 538 is disordered; it reads TEEESETESEGSVDPEELDSRA. Residues 519-533 show a composition bias toward acidic residues; that stretch reads EESETESEGSVDPEE. Ser-528 and Ser-536 each carry phosphoserine. In terms of domain architecture, W2 spans 539–716; the sequence is GSPQLDDIRV…REAEEESSED (178 aa). Ser-540 carries the phosphoserine; by DYRK2 modification. Phosphoserine is present on Ser-713.

Belongs to the eIF-2B gamma/epsilon subunits family. As to quaternary structure, component of the translation initiation factor 2B (eIF2B) complex which is a heterodecamer of two sets of five different subunits: alpha, beta, gamma, delta and epsilon. Subunits alpha, beta and delta comprise a regulatory subcomplex and subunits epsilon and gamma comprise a catalytic subcomplex. Within the complex, the hexameric regulatory complex resides at the center, with the two heterodimeric catalytic subcomplexes bound on opposite sides. In terms of processing, phosphorylated at Ser-540 by DYRK2; this is required for subsequent phosphorylation by GSK3B. Phosphorylated on serine and threonine residues by GSK3B; phosphorylation inhibits its function. Post-translationally, polyubiquitinated, probably by NEDD4.

It is found in the cytoplasm. Its subcellular location is the cytosol. With respect to regulation, activated by the chemical integrated stress response (ISR) inhibitor ISRIB which stimulates guanine nucleotide exchange factor activity for both phosphorylated and unphosphorylated eIF2. Functionally, acts as a component of the translation initiation factor 2B (eIF2B) complex, which catalyzes the exchange of GDP for GTP on eukaryotic initiation factor 2 (eIF2) gamma subunit. Its guanine nucleotide exchange factor activity is repressed when bound to eIF2 complex phosphorylated on the alpha subunit, thereby limiting the amount of methionyl-initiator methionine tRNA available to the ribosome and consequently global translation is repressed. This chain is Translation initiation factor eIF2B subunit epsilon (Eif2b5), found in Mus musculus (Mouse).